Here is a 475-residue protein sequence, read N- to C-terminus: Glutamyl-tRNA(Gln) amidotransferase subunit A (475 aa).

Catalysis depends on charge relay system residues Lys-66 and Ser-141. Residue Ser-165 is the Acyl-ester intermediate of the active site.

Belongs to the amidase family. GatA subfamily. Heterotrimer of A, B and C subunits.

The catalysed reaction is L-glutamyl-tRNA(Gln) + L-glutamine + ATP + H2O = L-glutaminyl-tRNA(Gln) + L-glutamate + ADP + phosphate + H(+). Its function is as follows. Allows the formation of correctly charged Gln-tRNA(Gln) through the transamidation of misacylated Glu-tRNA(Gln) in organisms which lack glutaminyl-tRNA synthetase. The reaction takes place in the presence of glutamine and ATP through an activated gamma-phospho-Glu-tRNA(Gln). This chain is Glutamyl-tRNA(Gln) amidotransferase subunit A (gatA), found in Thermotoga maritima (strain ATCC 43589 / DSM 3109 / JCM 10099 / NBRC 100826 / MSB8).